The following is a 70-amino-acid chain: uncharacterized protein (70 aa).

Residues Leu40–Ser70 are disordered. Residues Ser51–Glu61 are compositionally biased toward polar residues.

This is an uncharacterized protein from Bdellovibrio phage phiMH2K (Bacteriophage phiMH2K).